We begin with the raw amino-acid sequence, 639 residues long: Sodium-dependent phosphate transport protein 2A (639 aa).

At 1 to 103 (MISYGENLGG…LRRAGVTLLK (103 aa)) the chain is on the cytoplasmic side. Phosphoserine occurs at positions 14 and 34. The chain crosses the membrane as a helical span at residues 104 to 125 (VPLMLSFLYLFVCSLDVLSSAF). Residues 126–145 (QLAGGKVAGDIFKDNAILSN) are Extracellular-facing. The chain crosses the membrane as a helical span at residues 146–163 (PVAGLVVGILVTVLVQSS). Residues 164–165 (ST) are Cytoplasmic-facing. The chain crosses the membrane as a helical span at residues 166 to 185 (STSIVVSMVSSGLLEVSSAI). Topologically, residues 186 to 347 (PIIMGSNIGT…HIFVDTGLPD (162 aa)) are extracellular. Disulfide bonds link C225–C522 and C306–C336. 3 N-linked (GlcNAc...) asparagine glycosylation sites follow: N298, N323, and N330. The chain crosses the membrane as a helical span at residues 348-370 (LAVGLILLAGSLALLCTCLILLV). Residues 371-412 (KMLNSLLKGQVAKVIQKVINTDFPTPFTWATGYFAMVVGASM) lie on the Cytoplasmic side of the membrane. A helical membrane pass occupies residues 413–436 (TFVVQSSSVFTSAITPLIGLGVIS). Residues 437–466 (IERAYPLTLGSNIGTTTTAILAALASPREK) lie on the Extracellular side of the membrane. A helical membrane pass occupies residues 467–487 (LSSAFQIALCHFFFNISGILL). Topologically, residues 488 to 513 (WYPVPCTRLPIRMAKALGKRTAKYRW) are cytoplasmic. T508 carries the phosphothreonine; by PKC modification. The helical transmembrane segment at 514–534 (FAVLYLLLCFLLLPSMVFGLS) threads the bilayer. Residues 535 to 539 (MAGWR) lie on the Extracellular side of the membrane. A helical membrane pass occupies residues 540–561 (AMVGVGAPFGALLAFVVLVSAL). The Cytoplasmic segment spans residues 562–639 (QHRSPGCLPK…MPHHHDATRL (78 aa)). A Phosphoserine modification is found at S607. T623 carries the post-translational modification Phosphothreonine. S625 is subject to Phosphoserine.

Belongs to the SLC34A transporter family. As to quaternary structure, interacts via its C-terminal region with NHERF4. Interacts with NHERF1. Interacts with TMEM174; regulates SLC34A1 internalization by PTH and FGF23.

The protein resides in the apical cell membrane. It localises to the cell membrane. The enzyme catalyses 3 Na(+)(out) + phosphate(out) = 3 Na(+)(in) + phosphate(in). Its function is as follows. Involved in actively transporting phosphate into cells via Na(+) cotransport in the renal brush border membrane. The cotransport has a Na(+):Pi stoichiometry of 3:1 and is electrogenic. The chain is Sodium-dependent phosphate transport protein 2A from Ovis aries (Sheep).